We begin with the raw amino-acid sequence, 181 residues long: Translation initiation factor IF-3 (181 aa).

It belongs to the IF-3 family. In terms of assembly, monomer.

The protein localises to the cytoplasm. Functionally, IF-3 binds to the 30S ribosomal subunit and shifts the equilibrium between 70S ribosomes and their 50S and 30S subunits in favor of the free subunits, thus enhancing the availability of 30S subunits on which protein synthesis initiation begins. This Idiomarina loihiensis (strain ATCC BAA-735 / DSM 15497 / L2-TR) protein is Translation initiation factor IF-3.